The chain runs to 201 residues: Type III effector protein HopBF1 (201 aa).

ATP is bound by residues serine 39, glutamine 40, lysine 41, aspartate 106, isoleucine 108, and aspartate 113. Residue aspartate 154 is part of the active site. ATP is bound at residue glutamine 156.

It belongs to the HopBF1 family.

Its subcellular location is the secreted. It is found in the host cell. It carries out the reaction L-seryl-[protein] + ATP = O-phospho-L-seryl-[protein] + ADP + H(+). In terms of biological role, effector protein that targets and inactivates the plant molecular chaperone HSP90 during infection. HopBF1 is recognized by HSP90 as a host client. As a result, HopBF1 phosphorylates HSP90, leading to the inactivation of the HSP90 ATPase activity and chaperone function. Phosphorylation of HSP90 prevents activation of immune receptors that trigger the hypersensitive response in plants. HopBF1 is sufficient to cause severe disease symptoms in plants infected with P.syringae. In vitro, can phosphorylate the recombinant yeast HSP82 (HSP90) on Ser-99, Triticum aestivum (wheat) HSP90 and human HSP 90-beta, but not the prokaryotic HSP90 orthologs, HtpG from E.coli and P.syringae. Does not act on generic protein kinase substrates such as casein and myelin basic protein, as well as the yeast HSP70s and Bip chaperones. The chain is Type III effector protein HopBF1 from Pseudomonas syringae pv. syringae (strain FF5).